Consider the following 306-residue polypeptide: GTP cyclohydrolase FolE2 (306 aa).

It belongs to the GTP cyclohydrolase IV family.

It carries out the reaction GTP + H2O = 7,8-dihydroneopterin 3'-triphosphate + formate + H(+). It participates in cofactor biosynthesis; 7,8-dihydroneopterin triphosphate biosynthesis; 7,8-dihydroneopterin triphosphate from GTP: step 1/1. In terms of biological role, converts GTP to 7,8-dihydroneopterin triphosphate. The sequence is that of GTP cyclohydrolase FolE2 from Pseudoalteromonas atlantica (strain T6c / ATCC BAA-1087).